Reading from the N-terminus, the 555-residue chain is Oligo-1,6-glucosidase (555 aa).

The Nucleophile role is filled by aspartate 199. Catalysis depends on glutamate 255, which acts as the Proton donor.

This sequence belongs to the glycosyl hydrolase 13 family.

The protein localises to the cytoplasm. It carries out the reaction Hydrolysis of (1-&gt;6)-alpha-D-glucosidic linkages in some oligosaccharides produced from starch and glycogen by alpha-amylase, and in isomaltose.. The chain is Oligo-1,6-glucosidase (malL) from Heyndrickxia coagulans (Weizmannia coagulans).